Consider the following 1402-residue polypeptide: DNA-directed RNA polymerase subunit beta' (1402 aa).

Residues Cys-71, Cys-73, Cys-86, and Cys-89 each contribute to the Zn(2+) site. The Mg(2+) site is built by Asp-462, Asp-464, and Asp-466. The Zn(2+) site is built by Cys-811, Cys-885, Cys-892, and Cys-895.

Belongs to the RNA polymerase beta' chain family. In terms of assembly, the RNAP catalytic core consists of 2 alpha, 1 beta, 1 beta' and 1 omega subunit. When a sigma factor is associated with the core the holoenzyme is formed, which can initiate transcription. Mg(2+) is required as a cofactor. The cofactor is Zn(2+).

It catalyses the reaction RNA(n) + a ribonucleoside 5'-triphosphate = RNA(n+1) + diphosphate. Functionally, DNA-dependent RNA polymerase catalyzes the transcription of DNA into RNA using the four ribonucleoside triphosphates as substrates. The sequence is that of DNA-directed RNA polymerase subunit beta' from Rhizobium johnstonii (strain DSM 114642 / LMG 32736 / 3841) (Rhizobium leguminosarum bv. viciae).